A 234-amino-acid chain; its full sequence is Leucyl/phenylalanyl-tRNA--protein transferase (234 aa).

This sequence belongs to the L/F-transferase family.

It is found in the cytoplasm. It carries out the reaction N-terminal L-lysyl-[protein] + L-leucyl-tRNA(Leu) = N-terminal L-leucyl-L-lysyl-[protein] + tRNA(Leu) + H(+). The catalysed reaction is N-terminal L-arginyl-[protein] + L-leucyl-tRNA(Leu) = N-terminal L-leucyl-L-arginyl-[protein] + tRNA(Leu) + H(+). It catalyses the reaction L-phenylalanyl-tRNA(Phe) + an N-terminal L-alpha-aminoacyl-[protein] = an N-terminal L-phenylalanyl-L-alpha-aminoacyl-[protein] + tRNA(Phe). Functionally, functions in the N-end rule pathway of protein degradation where it conjugates Leu, Phe and, less efficiently, Met from aminoacyl-tRNAs to the N-termini of proteins containing an N-terminal arginine or lysine. This Escherichia coli O81 (strain ED1a) protein is Leucyl/phenylalanyl-tRNA--protein transferase.